A 119-amino-acid polypeptide reads, in one-letter code: Membrane-anchored ubiquitin-fold protein 1 (119 aa).

The Ubiquitin-like domain maps to 9-75; that stretch reads FEIKFRLPDG…LENNKTLSEC (67 aa). Cysteine methyl ester is present on Cys-116. Cys-116 carries S-farnesyl cysteine lipidation. Positions 117–119 are cleaved as a propeptide — removed in mature form; it reads SIM.

The protein localises to the cell membrane. Functionally, may serve as docking site to facilitate the association of other proteins to the plasma membrane. The protein is Membrane-anchored ubiquitin-fold protein 1 (MUB1) of Oryza sativa subsp. japonica (Rice).